A 220-amino-acid chain; its full sequence is Germin-like protein subfamily T member 2 (220 aa).

Residues 1 to 27 (MTTLQISSSLFRSFLLVICVFVIPSLS) form the signal peptide. Residues Cys37 and Cys52 are joined by a disulfide bond. The region spanning 64-212 (SGLGGPLNTS…TFRTDDVTVN (149 aa)) is the Cupin type-1 domain. N-linked (GlcNAc...) asparagine glycosylation occurs at Asn71. Residues His112, His114, and Glu119 each coordinate Mn(2+). An N-linked (GlcNAc...) asparagine glycan is attached at Asn136. His158 is a binding site for Mn(2+).

The protein belongs to the germin family. As to quaternary structure, oligomer (believed to be a pentamer but probably hexamer).

It localises to the secreted. Its subcellular location is the extracellular space. The protein localises to the apoplast. In terms of biological role, may play a role in plant defense. Probably has no oxalate oxidase activity even if the active site is conserved. The protein is Germin-like protein subfamily T member 2 of Arabidopsis thaliana (Mouse-ear cress).